A 213-amino-acid polypeptide reads, in one-letter code: Large ribosomal subunit protein uL3 (213 aa).

A disordered region spans residues 122–147 (AIKRHGQSRGPMAHGSRYHRRPGSMG).

It belongs to the universal ribosomal protein uL3 family. In terms of assembly, part of the 50S ribosomal subunit. Forms a cluster with proteins L14 and L19.

Its function is as follows. One of the primary rRNA binding proteins, it binds directly near the 3'-end of the 23S rRNA, where it nucleates assembly of the 50S subunit. This is Large ribosomal subunit protein uL3 from Geobacillus stearothermophilus (Bacillus stearothermophilus).